The sequence spans 401 residues: Large ribosomal subunit protein uL3 (401 aa).

Residues M1 to R21 form a disordered region.

Belongs to the universal ribosomal protein uL3 family.

It localises to the cytoplasm. Its function is as follows. The L3 protein is a component of the large subunit of cytoplasmic ribosomes. The sequence is that of Large ribosomal subunit protein uL3 (rpl-3) from Caenorhabditis briggsae.